Here is a 48-residue protein sequence, read N- to C-terminus: U1-theraphotoxin-Agm1a (48 aa).

Intrachain disulfides connect cysteine 4-cysteine 34, cysteine 8-cysteine 40, and cysteine 22-cysteine 45. Methionine 44 bears the Methionine sulfoxide; partial mark.

This sequence belongs to the neurotoxin 12 (Hwtx-2) family. 01 (Ap1a) subfamily. Expressed by the venom gland.

It localises to the secreted. Is toxic to both insects and mammals. Induces reversible paralysis when injected into S.frugiperda larvae. Reduces both the amplitude and frequency of responses from muscle (GF-TTM and GF-DLM) pathways in the D.melanogaster giant fiber circuit, suggesting an action at the neuromuscular junction, which is mediated by glutamatergic receptors. In mice, intracranial injection of 30 ug causes increased urination, myoclonus, hypermotility with circular movements followed by respiratory and generalized seizures resulting in death within 25-35 minutes of injection. In Acanthoscurria gomesiana (Tarantula spider), this protein is U1-theraphotoxin-Agm1a.